Consider the following 418-residue polypeptide: 3-isopropylmalate dehydratase large subunit 1 (418 aa).

[4Fe-4S] cluster-binding residues include C298, C358, and C361.

It belongs to the aconitase/IPM isomerase family. LeuC type 2 subfamily. In terms of assembly, heterodimer of LeuC and LeuD. It depends on [4Fe-4S] cluster as a cofactor.

The enzyme catalyses (2R,3S)-3-isopropylmalate = (2S)-2-isopropylmalate. It participates in amino-acid biosynthesis; L-leucine biosynthesis; L-leucine from 3-methyl-2-oxobutanoate: step 2/4. In terms of biological role, catalyzes the isomerization between 2-isopropylmalate and 3-isopropylmalate, via the formation of 2-isopropylmaleate. This Methanopyrus kandleri (strain AV19 / DSM 6324 / JCM 9639 / NBRC 100938) protein is 3-isopropylmalate dehydratase large subunit 1.